The primary structure comprises 707 residues: Protein O-mannosyl-transferase TMEM260 (707 aa).

8 helical membrane passes run 28–48, 71–91, 94–114, 141–161, 189–209, 222–242, 318–338, and 356–376; these read GGVA…PPSV, YPLF…GSIA, VNLL…FTVF, IAAE…ALTV, NQHT…FQLL, LSLY…SSYL, NPSL…FFAW, and FWMQ…AAVV. The Lumenal portion of the chain corresponds to 377 to 707; that stretch reads SETNRVLNSN…LQSLRNRKNV (331 aa). Residues Asn-407, Asn-535, and Asn-568 are each glycosylated (N-linked (GlcNAc...) asparagine).

This sequence belongs to the glycosyltransferase 117 (GT117) family. Expressed in brain, heart, kidney, liver, lung, pancreas and placenta but are not detected in skeletal muscle.

The protein resides in the endoplasmic reticulum membrane. The protein localises to the membrane. The catalysed reaction is a di-trans,poly-cis-dolichyl beta-D-mannosyl phosphate + L-seryl-[protein] = 3-O-(alpha-D-mannosyl)-L-seryl-[protein] + a di-trans,poly-cis-dolichyl phosphate + H(+). It carries out the reaction a di-trans,poly-cis-dolichyl beta-D-mannosyl phosphate + L-threonyl-[protein] = 3-O-(alpha-D-mannosyl)-L-threonyl-[protein] + a di-trans,poly-cis-dolichyl phosphate + H(+). In terms of biological role, O-mannosyl-transferase that transfers mannosyl residues to the hydroxyl group of serine or threonine residues of proteins. Specifically glycosylates the IPT/TIG domain of target proteins, such as MET and MST1R/RON. TMEM260-mediated O-mannosylated residues are composed of single mannose glycans that are not elongated or modified. The protein is Protein O-mannosyl-transferase TMEM260 of Homo sapiens (Human).